The chain runs to 446 residues: ATP synthase subunit b-delta (446 aa).

The interval 1–168 (MSTFIGQLVG…PKGADVEYPL (168 aa)) is ATP synthase subunit b. Residues 4 to 24 (FIGQLVGFAAIVYLVWWYVVP) form a helical membrane-spanning segment. The segment at 169 to 446 (LAKMRSASRR…LVAAEAALPD (278 aa)) is ATP synthase subunit delta.

In the N-terminal section; belongs to the ATPase B chain family. The protein in the C-terminal section; belongs to the ATPase delta chain family. In terms of assembly, F-type ATPases have 2 components, F(1) - the catalytic core - and F(0) - the membrane proton channel. F(1) has five subunits: alpha(3), beta(3), gamma(1), delta(1), epsilon(1). F(0) has three main subunits: a(1), b(2) and c(10-14). The alpha and beta chains form an alternating ring which encloses part of the gamma chain. F(1) is attached to F(0) by a central stalk formed by the gamma and epsilon chains, while a peripheral stalk is formed by the delta and b chains.

Its subcellular location is the cell membrane. In terms of biological role, f(1)F(0) ATP synthase produces ATP from ADP in the presence of a proton or sodium gradient. F-type ATPases consist of two structural domains, F(1) containing the extramembraneous catalytic core and F(0) containing the membrane proton channel, linked together by a central stalk and a peripheral stalk. During catalysis, ATP synthesis in the catalytic domain of F(1) is coupled via a rotary mechanism of the central stalk subunits to proton translocation. This fusion protein includes a component of the F(0) channel (subunit b) and of the F(1) subunit (subunit delta). Two copies of subunit b and one of delta together form the peripheral 'stator' stalk which links F(1) to F(0). The protein is ATP synthase subunit b-delta (atpFH) of Mycobacterium leprae (strain Br4923).